A 934-amino-acid chain; its full sequence is Aconitate hydratase A (934 aa).

The segment at Glu-398–Asn-454 is disordered. Positions Leu-404 to Glu-420 are enriched in basic and acidic residues. A compositionally biased stretch (low complexity) spans Ser-427–Ser-445. The [4Fe-4S] cluster site is built by Cys-473, Cys-539, and Cys-542.

This sequence belongs to the aconitase/IPM isomerase family. Monomer. [4Fe-4S] cluster serves as cofactor.

The catalysed reaction is citrate = D-threo-isocitrate. It carries out the reaction (2S,3R)-3-hydroxybutane-1,2,3-tricarboxylate = 2-methyl-cis-aconitate + H2O. It participates in carbohydrate metabolism; tricarboxylic acid cycle; isocitrate from oxaloacetate: step 2/2. Its pathway is organic acid metabolism; propanoate degradation. Its function is as follows. Involved in the catabolism of short chain fatty acids (SCFA) via the tricarboxylic acid (TCA)(acetyl degradation route) and probably via the 2-methylcitrate cycle I (propionate degradation route). Catalyzes the reversible isomerization of citrate to isocitrate via cis-aconitate. Could catalyze the hydration of 2-methyl-cis-aconitate to yield (2R,3S)-2-methylisocitrate. The apo form of AcnA functions as a RNA-binding regulatory protein. The sequence is that of Aconitate hydratase A (acn) from Corynebacterium diphtheriae (strain ATCC 700971 / NCTC 13129 / Biotype gravis).